We begin with the raw amino-acid sequence, 178 residues long: Large ribosomal subunit protein uL5 (178 aa).

Belongs to the universal ribosomal protein uL5 family. As to quaternary structure, part of the 50S ribosomal subunit; part of the 5S rRNA/L5/L18/L25 subcomplex. Contacts the 5S rRNA and the P site tRNA. Forms a bridge to the 30S subunit in the 70S ribosome.

Its function is as follows. This is one of the proteins that bind and probably mediate the attachment of the 5S RNA into the large ribosomal subunit, where it forms part of the central protuberance. In the 70S ribosome it contacts protein S13 of the 30S subunit (bridge B1b), connecting the 2 subunits; this bridge is implicated in subunit movement. Contacts the P site tRNA; the 5S rRNA and some of its associated proteins might help stabilize positioning of ribosome-bound tRNAs. This chain is Large ribosomal subunit protein uL5, found in Acinetobacter baumannii (strain AB0057).